The following is a 382-amino-acid chain: POU domain, class 3, transcription factor 2-A (382 aa).

3 disordered regions span residues 69-136 (PWAT…SSNG), 150-206 (GMIN…TPTS), and 348-382 (EKRMTPPGGTIPGAEDIYGASRDTPPHLGVQTSVQ). Residues 122-136 (STGSTHLSSMASSNG) show a composition bias toward polar residues. A compositionally biased stretch (basic and acidic residues) spans 165–178 (LRDSHDDHHGDHGH). Residues 179–194 (QQVSQAQQQHSQLQGG) show a composition bias toward low complexity. In terms of domain architecture, POU-specific spans 201–275 (EDTPTSDDLE…LLNKWLEEAD (75 aa)). The segment at residues 293–352 (KRKKRTSIEVSVKGALESHFLKCPKPSAPEITSLADSLQLEKEVVRVWFCNRRQKEKRMT) is a DNA-binding region (homeobox).

Belongs to the POU transcription factor family. Class-3 subfamily. Expressed in the developing brain and spinal cord. Also found in a restricted region of the auditory vesicle during development. In the adult, expression is restricted to the brain.

It is found in the nucleus. In terms of biological role, transcription factor that may be implicated in patterning of the central nervous system during early development. This chain is POU domain, class 3, transcription factor 2-A (pou3f2-a), found in Xenopus laevis (African clawed frog).